Reading from the N-terminus, the 264-residue chain is 5'-nucleotidase SurE (264 aa).

Residues Asp-10, Asp-11, Ser-43, and Asn-99 each coordinate a divalent metal cation.

Belongs to the SurE nucleotidase family. The cofactor is a divalent metal cation.

The protein resides in the cytoplasm. It catalyses the reaction a ribonucleoside 5'-phosphate + H2O = a ribonucleoside + phosphate. Nucleotidase that shows phosphatase activity on nucleoside 5'-monophosphates. In Methanococcus maripaludis (strain C7 / ATCC BAA-1331), this protein is 5'-nucleotidase SurE.